Here is a 77-residue protein sequence, read N- to C-terminus: Small integral membrane protein 5 (77 aa).

A helical transmembrane segment spans residues 32-52 (IVAFSVIILFTATVLLLLLIA).

It localises to the membrane. The sequence is that of Small integral membrane protein 5 (SMIM5) from Homo sapiens (Human).